The primary structure comprises 326 residues: 5-dehydro-2-deoxygluconokinase (326 aa).

Belongs to the carbohydrate kinase PfkB family.

It catalyses the reaction 5-dehydro-2-deoxy-D-gluconate + ATP = 6-phospho-5-dehydro-2-deoxy-D-gluconate + ADP + H(+). It functions in the pathway polyol metabolism; myo-inositol degradation into acetyl-CoA; acetyl-CoA from myo-inositol: step 5/7. Catalyzes the phosphorylation of 5-dehydro-2-deoxy-D-gluconate (2-deoxy-5-keto-D-gluconate or DKG) to 6-phospho-5-dehydro-2-deoxy-D-gluconate (DKGP). The polypeptide is 5-dehydro-2-deoxygluconokinase (Shouchella clausii (strain KSM-K16) (Alkalihalobacillus clausii)).